Consider the following 318-residue polypeptide: WRKY transcription factor 28 (318 aa).

Composition is skewed to polar residues over residues 74–84 (SSEVFNSSIDQ) and 106–115 (RVSPSNSSSS). The segment at 74–158 (SSEVFNSSID…KTEVKKQREP (85 aa)) is disordered. Basic and acidic residues-rich tracts occupy residues 116–126 (EADHPGEDSGK) and 148–158 (KKTEVKKQREP). The WRKY DNA-binding region spans 166-231 (SEVDHLEDGY…YEGQHNHPIP (66 aa)).

The protein belongs to the WRKY group II-c family.

The protein resides in the nucleus. Transcription factor. Interacts specifically with the W box (5'-(T)TGAC[CT]-3'), a frequently occurring elicitor-responsive cis-acting element. The sequence is that of WRKY transcription factor 28 (WRKY28) from Arabidopsis thaliana (Mouse-ear cress).